Here is a 536-residue protein sequence, read N- to C-terminus: Aminopeptidase (536 aa).

Positions 1–24 are cleaved as a signal peptide; that stretch reads MSNKNNLRYALGALALSVSAASLA. One can recognise a PA domain in the interval 152–255; that stretch reads AGDVTAKVVP…ATYDNGVAWS (104 aa). Thr196 bears the Phosphothreonine mark. Zn(2+) is bound by residues His296 and Asp308. The Proton acceptor role is filled by Glu340. The Zn(2+) site is built by Glu341, Asp369, and His467. Cysteines 465 and 470 form a disulfide.

The protein belongs to the peptidase M28 family. M28A subfamily. It depends on Zn(2+) as a cofactor.

It is found in the secreted. The catalysed reaction is Release of an N-terminal amino acid, Xaa-|-Yaa-, in which Xaa is preferably Leu, but may be other amino acids including Pro although not Arg or Lys, and Yaa may be Pro. Amino acid amides and methyl esters are also readily hydrolyzed, but rates on arylamides are exceedingly low.. Its function is as follows. A secreted aminopeptidase. Acts on free N-terminal amino groups with a very strong preference for Leu in the first position. In Pseudomonas aeruginosa (strain UCBPP-PA14), this protein is Aminopeptidase.